We begin with the raw amino-acid sequence, 292 residues long: Protease HtpX homolog (292 aa).

2 helical membrane passes run 4-24 and 39-59; these read ILLF…VASL and GALL…SLLI. Histidine 144 serves as a coordination point for Zn(2+). The active site involves glutamate 145. Histidine 148 contacts Zn(2+). A run of 2 helical transmembrane segments spans residues 159–179 and 199–219; these read LIQG…GYAV and VTTI…VAWF. Residue glutamate 224 participates in Zn(2+) binding.

Belongs to the peptidase M48B family. Requires Zn(2+) as cofactor.

It is found in the cell inner membrane. The polypeptide is Protease HtpX homolog (Verminephrobacter eiseniae (strain EF01-2)).